The primary structure comprises 392 residues: Alanine--glyoxylate aminotransferase (392 aa).

Residue Thr-9 is modified to Phosphothreonine. An N6-(pyridoxal phosphate)lysine modification is found at Lys-209. Position 225 is an N6-acetyllysine; alternate (Lys-225). Position 225 is an N6-succinyllysine; alternate (Lys-225). N6-acetyllysine is present on residues Lys-234 and Lys-312. Arg-360 is a substrate binding site.

The protein belongs to the class-V pyridoxal-phosphate-dependent aminotransferase family. As to quaternary structure, homodimer. Pyridoxal 5'-phosphate serves as cofactor. In terms of tissue distribution, liver.

It localises to the peroxisome. It carries out the reaction L-serine + pyruvate = 3-hydroxypyruvate + L-alanine. The catalysed reaction is glyoxylate + L-alanine = glycine + pyruvate. Its activity is regulated as follows. Alanine--glyoxylate aminotransferase activity is inhibited by 1 mM (aminooxy)acetic acid by 97.5%. Functionally, peroxisomal aminotransferase that catalyzes the transamination of glyoxylate to glycine and contributes to the glyoxylate detoxification. Also catalyzes the transamination between L-serine and pyruvate and contributes to gluconeogenesis from the L-serine metabolism. The protein is Alanine--glyoxylate aminotransferase of Homo sapiens (Human).